The primary structure comprises 32 residues: Photosystem II reaction center protein T (32 aa).

The helical transmembrane segment at 3-23 threads the bilayer; sequence AITYTFILFLTLGLLFFAVAF.

Belongs to the PsbT family. In terms of assembly, PSII is composed of 1 copy each of membrane proteins PsbA, PsbB, PsbC, PsbD, PsbE, PsbF, PsbH, PsbI, PsbJ, PsbK, PsbL, PsbM, PsbT, PsbX, PsbY, PsbZ, Psb30/Ycf12, peripheral proteins PsbO, CyanoQ (PsbQ), PsbU, PsbV and a large number of cofactors. It forms dimeric complexes.

Its subcellular location is the cellular thylakoid membrane. Its function is as follows. Found at the monomer-monomer interface of the photosystem II (PS II) dimer, plays a role in assembly and dimerization of PSII. PSII is a light-driven water plastoquinone oxidoreductase, using light energy to abstract electrons from H(2)O, generating a proton gradient subsequently used for ATP formation. This is Photosystem II reaction center protein T from Synechococcus sp. (strain JA-2-3B'a(2-13)) (Cyanobacteria bacterium Yellowstone B-Prime).